A 111-amino-acid polypeptide reads, in one-letter code: T cell receptor beta variable 20-1 (111 aa).

Residues 1-15 form the signal peptide; the sequence is MLLLLLLLGPGSGLG. Residues 16–111 form the Ig-like domain; it reads AVVSQHPSRV…DSSFYICSAR (96 aa). An intrachain disulfide couples C37 to C108.

In terms of assembly, alpha-beta TR is a heterodimer composed of an alpha and beta chain; disulfide-linked. The alpha-beta TR is associated with the transmembrane signaling CD3 coreceptor proteins to form the TR-CD3 (TcR or TCR). The assembly of alpha-beta TR heterodimers with CD3 occurs in the endoplasmic reticulum where a single alpha-beta TR heterodimer associates with one CD3D-CD3E heterodimer, one CD3G-CD3E heterodimer and one CD247 homodimer forming a stable octameric structure. CD3D-CD3E and CD3G-CD3E heterodimers preferentially associate with TR alpha and TR beta chains, respectively. The association of the CD247 homodimer is the last step of TcR assembly in the endoplasmic reticulum and is required for transport to the cell surface.

It is found in the cell membrane. In terms of biological role, v region of the variable domain of T cell receptor (TR) beta chain that participates in the antigen recognition. Alpha-beta T cell receptors are antigen specific receptors which are essential to the immune response and are present on the cell surface of T lymphocytes. Recognize peptide-major histocompatibility (MH) (pMH) complexes that are displayed by antigen presenting cells (APC), a prerequisite for efficient T cell adaptive immunity against pathogens. Binding of alpha-beta TR to pMH complex initiates TR-CD3 clustering on the cell surface and intracellular activation of LCK that phosphorylates the ITAM motifs of CD3G, CD3D, CD3E and CD247 enabling the recruitment of ZAP70. In turn ZAP70 phosphorylates LAT, which recruits numerous signaling molecules to form the LAT signalosome. The LAT signalosome propagates signal branching to three major signaling pathways, the calcium, the mitogen-activated protein kinase (MAPK) kinase and the nuclear factor NF-kappa-B (NF-kB) pathways, leading to the mobilization of transcription factors that are critical for gene expression and essential for T cell growth and differentiation. The T cell repertoire is generated in the thymus, by V-(D)-J rearrangement. This repertoire is then shaped by intrathymic selection events to generate a peripheral T cell pool of self-MH restricted, non-autoaggressive T cells. Post-thymic interaction of alpha-beta TR with the pMH complexes shapes TR structural and functional avidity. This Homo sapiens (Human) protein is T cell receptor beta variable 20-1.